The chain runs to 167 residues: Intermembrane phospholipid transport system binding protein MlaD (167 aa).

Residues 1–6 are Cytoplasmic-facing; that stretch reads MRQTIK. A helical; Signal-anchor for type II membrane protein transmembrane segment spans residues 7-27; sequence YEFWVGLFLLLGIGALVFLGL. Residues 28 to 167 are Periplasmic-facing; that stretch reads RVANVQGFAE…GNEKSESTEQ (140 aa). The interval 40-118 is MCE/MlaD; it reads SYTVTATFDN…GEQYIALTMG (79 aa).

It belongs to the MlaD family. In terms of assembly, the complex is composed of two ATP-binding proteins (MlaF), two transmembrane proteins (MlaE), two cytoplasmic solute-binding proteins (MlaB) and six periplasmic solute-binding proteins (MlaD).

Its subcellular location is the cell inner membrane. Functionally, part of the ABC transporter complex MlaFEDB, which is involved in a phospholipid transport pathway that maintains lipid asymmetry in the outer membrane by retrograde trafficking of phospholipids from the outer membrane to the inner membrane. MlaD functions in substrate binding with strong affinity for phospholipids and modulates ATP hydrolytic activity of the complex. This is Intermembrane phospholipid transport system binding protein MlaD from Haemophilus influenzae (strain ATCC 51907 / DSM 11121 / KW20 / Rd).